The sequence spans 493 residues: Dihydro-heme d1 dehydrogenase (493 aa).

An N-terminal signal peptide occupies residues 1 to 18 (MRLIGLALGLLLGALAQA). Residues 19 to 96 (GEAPGEALYR…ALVAYLYQAP (78 aa)) enclose the Cytochrome c domain. Heme c is bound by residues Cys-31, Cys-34, His-35, Arg-68, and Met-73. Positions 114–468 (PHPLATLPSR…YDAHSLEEVK (355 aa)) are D1-heme domain. Positions 165, 167, 169, 182, 207, 208, 341, 390, and 435 each coordinate heme d1. Arg-182 is a heme c binding site.

This sequence belongs to the cytochrome c family. In terms of assembly, monomer. Heme c is required as a cofactor.

Its subcellular location is the periplasm. It carries out the reaction dihydro-heme d1 + A = heme d1 + AH2. Its pathway is porphyrin-containing compound metabolism. Functionally, involved in heme d1 biosynthesis. Catalyzes the introduction of a double bond into the propionate side chain of pyrrole ring D of dihydro-heme d1, therefore converting dihydro-heme d1 to heme d1. In Pseudomonas aeruginosa (strain ATCC 15692 / DSM 22644 / CIP 104116 / JCM 14847 / LMG 12228 / 1C / PRS 101 / PAO1), this protein is Dihydro-heme d1 dehydrogenase.